The sequence spans 332 residues: Tetraacyldisaccharide 4'-kinase (332 aa).

60-67 serves as a coordination point for ATP; sequence TVGGTGKT.

The protein belongs to the LpxK family.

It carries out the reaction a lipid A disaccharide + ATP = a lipid IVA + ADP + H(+). Its pathway is glycolipid biosynthesis; lipid IV(A) biosynthesis; lipid IV(A) from (3R)-3-hydroxytetradecanoyl-[acyl-carrier-protein] and UDP-N-acetyl-alpha-D-glucosamine: step 6/6. Functionally, transfers the gamma-phosphate of ATP to the 4'-position of a tetraacyldisaccharide 1-phosphate intermediate (termed DS-1-P) to form tetraacyldisaccharide 1,4'-bis-phosphate (lipid IVA). This chain is Tetraacyldisaccharide 4'-kinase, found in Pseudomonas aeruginosa (strain LESB58).